The sequence spans 466 residues: Transcription factor SOX-10 (466 aa).

Disordered stretches follow at residues 1–67 (MAEE…DDDK), 160–198 (LRMQHKKDHPDYKYQPRRRKNGKAAQGEAECPGGETDQG), 213–275 (DHRH…DFGN), 355–375 (QVKTETTGPQGPPHYTDQPST), and 433–466 (RPLYTAISDPSPSGPQSHSPTHWEQPVYTTLSRP). Over residues 23 to 32 (LSPSSAPSLG) the composition is skewed to low complexity. The residue at position 24 (Ser-24) is a Phosphoserine. A dimerization (DIM) region spans residues 62-102 (EADDDKFPVCIREAVSQVLSGYDWTLVPMPVRVNGASKSKP). Residues 104-172 (VKRPMNAFMV…QHKKDHPDYK (69 aa)) constitute a DNA-binding region (HMG box). Composition is skewed to basic and acidic residues over residues 160 to 173 (LRMQHKKDHPDYKY) and 254 to 271 (ADPKRDGRSLGEGGKPHI). The segment at 228–310 (PEHPSGQSHG…LPPNGHPGHV (83 aa)) is transactivation domain (TAM). The transactivation domain (TAC) stretch occupies residues 353-466 (KAQVKTETTG…QPVYTTLSRP (114 aa)). The segment covering 440 to 466 (SDPSPSGPQSHSPTHWEQPVYTTLSRP) has biased composition (polar residues).

Monomer. Interacts with Armcx3 at the mitochondrial outer membrane surface. Interacts with PAX3. Predominant expression in glial cells of the nervous system.

It is found in the cytoplasm. Its subcellular location is the nucleus. The protein localises to the mitochondrion outer membrane. Transcription factor that plays a central role in developing and mature glia. Specifically activates expression of myelin genes, during oligodendrocyte (OL) maturation, such as DUSP15 and MYRF, thereby playing a central role in oligodendrocyte maturation and CNS myelination. Once induced, MYRF cooperates with SOX10 to implement the myelination program. Transcriptional activator of MITF, acting synergistically with PAX3. Transcriptional activator of MBP, via binding to the gene promoter. The chain is Transcription factor SOX-10 (Sox10) from Rattus norvegicus (Rat).